The chain runs to 423 residues: uncharacterized protein (423 aa).

S51, D138, and N150 together coordinate substrate. ATP contacts are provided by residues 170–171 and 214–220; these read TD and TGGMRTK. The region spanning 315–406 is the PUA domain; sequence KGAIIIDENS…EKIHDVLGYS (92 aa).

It belongs to the glutamate 5-kinase family.

Its subcellular location is the cytoplasm. This is an uncharacterized protein from Saccharomyces cerevisiae (strain ATCC 204508 / S288c) (Baker's yeast).